Consider the following 452-residue polypeptide: UPF0210 protein Cthe_0410 (452 aa).

It belongs to the UPF0210 family. In terms of assembly, homodimer.

This Acetivibrio thermocellus (strain ATCC 27405 / DSM 1237 / JCM 9322 / NBRC 103400 / NCIMB 10682 / NRRL B-4536 / VPI 7372) (Clostridium thermocellum) protein is UPF0210 protein Cthe_0410.